The chain runs to 532 residues: Developmental and secondary metabolism regulator ve1 (532 aa).

A Velvet domain is found at 26 to 220 (NRSLWYQLTV…ADQGCRVRIR (195 aa)). A Nuclear localization signal motif is present at residues 40 to 45 (ERARAC). Positions 217 to 229 (VRIRRDVRMRKRD) are enriched in basic residues. Disordered regions lie at residues 217-440 (VRIR…TEPS) and 458-520 (PQVD…RADG). The segment covering 233–250 (GGNNNNNNNAGNNAGNNG) has biased composition (low complexity). Composition is skewed to basic and acidic residues over residues 251 to 260 (FERREEDFGR) and 283 to 294 (SEHRASYSDVSR). The segment covering 302–317 (YPPPPPPPPSYDPTPS) has biased composition (pro residues). Residues 397–411 (STSTYVPPSPSVYST) show a composition bias toward low complexity. The interval 435-463 (MNTEPSRGSIKISALVEPMPVIEPQVDPL) is PEST. Over residues 481–493 (FAQNTRPLFNGQR) the composition is skewed to polar residues.

It belongs to the velvet family. VeA subfamily. In terms of assembly, component of the heterotrimeric velvet complex composed of laeA, ve1 and velB; Ve1 acting as a bridging protein between laeA and velB. Interacts directly with laeA and velB.

The protein resides in the nucleus. The protein localises to the cytoplasm. Functionally, component of the velvet transcription factor complex that controls sexual/asexual developmental ratio in response to light, promoting sexual development in the darkness while stimulating asexual sporulation under illumination. The velvet complex hat acts as a global regulator for secondary metabolite gene expression. Controls the expression of the aurofusarin and trichothecene gene clusters. Also controls the expression of the deoxynivalenol (DON) gene cluster. Regulates hyphal growth and pigment formation. Acts as a positive regulator of virulence. The sequence is that of Developmental and secondary metabolism regulator ve1 from Gibberella zeae (strain ATCC MYA-4620 / CBS 123657 / FGSC 9075 / NRRL 31084 / PH-1) (Wheat head blight fungus).